The primary structure comprises 676 residues: Electrogenic aspartate/glutamate antiporter SLC25A13, mitochondrial (676 aa).

Ala-2 bears the N-acetylalanine mark. The interval 2–295 (AAAKVALTKR…TLADIERIAP (294 aa)) is regulatory N-terminal domain. The Mitochondrial intermembrane portion of the chain corresponds to 2–332 (AAAKVALTKR…LLQLAESAYR (331 aa)). At Lys-18 the chain carries N6-acetyllysine. EF-hand domains are found at residues 51 to 86 (SQPN…SVLC), 87 to 122 (APDA…TTIH), 123 to 157 (QHIP…FLLE), and 158 to 193 (IQLE…IRPH). Ca(2+)-binding residues include Asp-66, Thr-68, Asp-70, Leu-72, and Glu-77. Positions 296–311 (LEEGMLPFNLAEAQRQ) are linker loop domain. The carrier domain stretch occupies residues 322-613 (FLLQLAESAY…LQRWFYVDFG (292 aa)). 3 Solcar repeats span residues 327-419 (AESA…VRDK), 427-511 (VPLL…VKAS), and 519-607 (VSPG…LQRW). Residues 333–350 (FGLGSIAGAVGATAVYPI) traverse the membrane as a helical segment. At 351–393 (DLVKTRMQNQRSTGSFVGELMYKNSFDCFKKVLRYEGFFGLYR) the chain is on the mitochondrial matrix side. An N6-acetyllysine mark is found at Lys-354 and Lys-373. The helical transmembrane segment at 394 to 413 (GLLPQLLGVAPEKAIKLTVN) threads the bilayer. The Mitochondrial intermembrane portion of the chain corresponds to 414–436 (DFVRDKFMHKDGSVPLLAEIFAG). The chain crosses the membrane as a helical span at residues 437–450 (GCAGGSQVIFTNPL). At 451–485 (EIVKIRLQVAGEITTGPRVSALSVVRDLGFFGIYK) the chain is on the mitochondrial matrix side. Lys-454 is subject to N6-methyllysine. Lys-485 is subject to N6-acetyllysine; alternate. Lys-485 bears the N6-succinyllysine; alternate mark. A helical membrane pass occupies residues 486–505 (GAKACFLRDIPFSAIYFPCY). Residues 506 to 524 (AHVKASFANEDGQVSPGSL) lie on the Mitochondrial intermembrane side of the membrane. Residues 525–542 (LLAGAIAGMPAASLVTPA) traverse the membrane as a helical segment. Topologically, residues 543–581 (DVIKTRLQVAARAGQTTYNGVTDCFRKILREEGPKALWK) are mitochondrial matrix. An N6-succinyllysine modification is found at Lys-581. Residues 582 to 601 (GVAARVFRSSPQFGVTLLTY) form a helical membrane-spanning segment. At 602–676 (ELLQRWFYVD…STSKVTAGDS (75 aa)) the chain is on the mitochondrial intermembrane side. Residues 614 to 676 (GVKPVGSEPV…STSKVTAGDS (63 aa)) are C-terminal domain. At Lys-663 the chain carries N6-acetyllysine. Residue Ser-667 is modified to Phosphoserine.

Belongs to the mitochondrial carrier (TC 2.A.29) family. As to quaternary structure, homodimer (via N-terminus). At 10.5 dpc, expressed in branchial arches, a well as in the limb and tail buds. At 13.5 dpc expression is predominant in epithelial structures and the forebrain, kidney and liver. Expression in liver is maintained into adulthood.

The protein localises to the mitochondrion inner membrane. The catalysed reaction is L-aspartate(in) + L-glutamate(out) + H(+)(out) = L-aspartate(out) + L-glutamate(in) + H(+)(in). The enzyme catalyses 3-sulfino-L-alanine(out) + L-glutamate(in) + H(+)(in) = 3-sulfino-L-alanine(in) + L-glutamate(out) + H(+)(out). It catalyses the reaction 3-sulfino-L-alanine(out) + L-aspartate(in) = 3-sulfino-L-alanine(in) + L-aspartate(out). Functionally, mitochondrial electrogenic aspartate/glutamate antiporter that favors efflux of aspartate and entry of glutamate and proton within the mitochondria as part of the malate-aspartate shuttle. Also mediates the uptake of L-cysteinesulfinate (3-sulfino-L-alanine) by mitochondria in exchange of L-glutamate and proton. Can also exchange L-cysteinesulfinate with aspartate in their anionic form without any proton translocation. Lacks transport activity towards gamma-aminobutyric acid (GABA). The protein is Electrogenic aspartate/glutamate antiporter SLC25A13, mitochondrial of Mus musculus (Mouse).